The following is a 310-amino-acid chain: Homoserine O-acetyltransferase (310 aa).

The active-site Acyl-thioester intermediate is the Cys142. Substrate is bound by residues Lys163 and Ser192. Catalysis depends on His235, which acts as the Proton acceptor. The active site involves Glu237. Position 249 (Arg249) interacts with substrate.

Belongs to the MetA family.

It is found in the cytoplasm. It carries out the reaction L-homoserine + acetyl-CoA = O-acetyl-L-homoserine + CoA. Its pathway is amino-acid biosynthesis; L-methionine biosynthesis via de novo pathway; O-acetyl-L-homoserine from L-homoserine: step 1/1. Functionally, transfers an acetyl group from acetyl-CoA to L-homoserine, forming acetyl-L-homoserine. The chain is Homoserine O-acetyltransferase from Agathobacter rectalis (strain ATCC 33656 / DSM 3377 / JCM 17463 / KCTC 5835 / VPI 0990) (Eubacterium rectale).